A 303-amino-acid chain; its full sequence is Pseudouridine-5'-phosphate glycosidase (303 aa).

The active-site Proton donor is the glutamate 23. Positions 85 and 105 each coordinate substrate. Aspartate 137 is a binding site for Mn(2+). Residue 139–141 coordinates substrate; it reads SQD. The Nucleophile role is filled by lysine 158.

It belongs to the pseudouridine-5'-phosphate glycosidase family. As to quaternary structure, homotrimer. Mn(2+) is required as a cofactor.

The catalysed reaction is D-ribose 5-phosphate + uracil = psi-UMP + H2O. Functionally, catalyzes the reversible cleavage of pseudouridine 5'-phosphate (PsiMP) to ribose 5-phosphate and uracil. Functions biologically in the cleavage direction, as part of a pseudouridine degradation pathway. The sequence is that of Pseudouridine-5'-phosphate glycosidase from Myxococcus xanthus (strain DK1622).